The following is an 882-amino-acid chain: Alanine--tRNA ligase (882 aa).

H570, H574, C672, and H676 together coordinate Zn(2+).

Belongs to the class-II aminoacyl-tRNA synthetase family. It depends on Zn(2+) as a cofactor.

It localises to the cytoplasm. The enzyme catalyses tRNA(Ala) + L-alanine + ATP = L-alanyl-tRNA(Ala) + AMP + diphosphate. Its function is as follows. Catalyzes the attachment of alanine to tRNA(Ala) in a two-step reaction: alanine is first activated by ATP to form Ala-AMP and then transferred to the acceptor end of tRNA(Ala). Also edits incorrectly charged Ser-tRNA(Ala) and Gly-tRNA(Ala) via its editing domain. This chain is Alanine--tRNA ligase, found in Xanthomonas euvesicatoria pv. vesicatoria (strain 85-10) (Xanthomonas campestris pv. vesicatoria).